Reading from the N-terminus, the 549-residue chain is Undecaprenyl phosphate-alpha-4-amino-4-deoxy-L-arabinose arabinosyl transferase (549 aa).

Transmembrane regions (helical) follow at residues 9 to 29 (LLLI…GLWI), 80 to 100 (LFGV…LAYL), 112 to 132 (SLAC…SGYA), 136 to 156 (PQFT…LDAG), 166 to 186 (ILLG…AWLL), 204 to 224 (LLGY…PWAL), 256 to 276 (PWWF…GLLP), 288 to 308 (QAPV…FSLS), 312 to 332 (LPTY…HALV), 346 to 366 (NGLL…YLQL), 376 to 396 (FELF…LAQW), and 402 to 422 (AWAA…AAMP).

It belongs to the glycosyltransferase 83 family.

Its subcellular location is the cell inner membrane. The enzyme catalyses 4-amino-4-deoxy-alpha-L-arabinopyranosyl di-trans,octa-cis-undecaprenyl phosphate + lipid IVA = lipid IIA + di-trans,octa-cis-undecaprenyl phosphate.. It participates in lipopolysaccharide metabolism; 4-amino-4-deoxy-beta-L-arabinose-lipid A biosynthesis. Catalyzes the transfer of the L-Ara4N moiety of the glycolipid undecaprenyl phosphate-alpha-L-Ara4N to lipid A. The modified arabinose is attached to lipid A and is required for resistance to polymyxin and cationic antimicrobial peptides. The polypeptide is Undecaprenyl phosphate-alpha-4-amino-4-deoxy-L-arabinose arabinosyl transferase (Pseudomonas aeruginosa (strain UCBPP-PA14)).